The primary structure comprises 376 residues: Putative glutamate--cysteine ligase 2 (376 aa).

Belongs to the glutamate--cysteine ligase type 2 family. YbdK subfamily.

The enzyme catalyses L-cysteine + L-glutamate + ATP = gamma-L-glutamyl-L-cysteine + ADP + phosphate + H(+). In terms of biological role, ATP-dependent carboxylate-amine ligase which exhibits weak glutamate--cysteine ligase activity. The chain is Putative glutamate--cysteine ligase 2 from Corynebacterium glutamicum (strain R).